Reading from the N-terminus, the 368-residue chain is Aminomethyltransferase (368 aa).

It belongs to the GcvT family. As to quaternary structure, the glycine cleavage system is composed of four proteins: P, T, L and H.

It catalyses the reaction N(6)-[(R)-S(8)-aminomethyldihydrolipoyl]-L-lysyl-[protein] + (6S)-5,6,7,8-tetrahydrofolate = N(6)-[(R)-dihydrolipoyl]-L-lysyl-[protein] + (6R)-5,10-methylene-5,6,7,8-tetrahydrofolate + NH4(+). The glycine cleavage system catalyzes the degradation of glycine. This is Aminomethyltransferase from Xylella fastidiosa (strain 9a5c).